The sequence spans 465 residues: Ribulose bisphosphate carboxylase large chain (465 aa).

Lysine 4 carries the N6,N6,N6-trimethyllysine modification. Substrate-binding residues include asparagine 113 and threonine 163. Lysine 165 serves as the catalytic Proton acceptor. Lysine 167 provides a ligand contact to substrate. Residues lysine 191, aspartate 193, and glutamate 194 each contribute to the Mg(2+) site. N6-carboxylysine is present on lysine 191. Histidine 284 (proton acceptor) is an active-site residue. The substrate site is built by arginine 285, histidine 317, and serine 369.

Belongs to the RuBisCO large chain family. Type I subfamily. As to quaternary structure, heterohexadecamer of 8 large chains and 8 small chains; disulfide-linked. The disulfide link is formed within the large subunit homodimers. Requires Mg(2+) as cofactor. In terms of processing, the disulfide bond which can form in the large chain dimeric partners within the hexadecamer appears to be associated with oxidative stress and protein turnover.

The protein resides in the plastid. It is found in the chloroplast. It carries out the reaction 2 (2R)-3-phosphoglycerate + 2 H(+) = D-ribulose 1,5-bisphosphate + CO2 + H2O. It catalyses the reaction D-ribulose 1,5-bisphosphate + O2 = 2-phosphoglycolate + (2R)-3-phosphoglycerate + 2 H(+). RuBisCO catalyzes two reactions: the carboxylation of D-ribulose 1,5-bisphosphate, the primary event in carbon dioxide fixation, as well as the oxidative fragmentation of the pentose substrate in the photorespiration process. Both reactions occur simultaneously and in competition at the same active site. The sequence is that of Ribulose bisphosphate carboxylase large chain from Ephedra tweediana (Vining horsetail).